Consider the following 730-residue polypeptide: MASGRGASSRWFFTREQLENTPSRRCGVEADKELSCRQQAANLIQEMGQRLNVSQLTINTAIVYMHRFYMHHSFTKFNKNIISSTALFLAAKVEEQARKLEHVIKVAHACLHPLEPLLDTKCDAYLQQTQELVILETIMLQTLGFEITIEHPHTDVVKCTQLVRASKDLAQTSYFMATNSLHLTTFCLQYKPTVIACVCIHLACKWSNWEIPVSTDGKHWWEYVDPTVTLELLDELTHEFLQILEKTPNRLKKIRNWRANQAARKPKVDGQVSETPLLGSSLVQNSILVDSVTGVPTNPSFQKPSTSAFPAPVPLNSGNISVQDSHTSDNLSMLATGMPSTSYGLSSHQEWPQHQDSARTEQLYSQKQETSLSGSQYNINFQQGPSISLHSGLHHRPDKISDHSSVKQEYTHKAGSSKHHGPISTTPGIIPQKMSLDKYREKRKLETLDLDVRDHYIAAQVEQQHKQGQSQAASSSSVTSPIKMKIPIANTEKYMADKKEKSGSLKLRIPIPPTDKSASKEELKMKIKVSSSERHSSSDEGSGKSKHSSPHISRDHKEKHKEHPSSRHHTSSHKHSHSHSGSSSGGSKHSADGIPPTVLRSPVGLSSDGISSSSSSSRKRLHVNDASHNHHSKMSKSSKSSGSSSSSSSSVKQYISSHNSVFNHPLPPPPPVTYQVGYGHLSTLVKLDKKPVETNGPDANHEYSTSSQHMDYKDTFDMLDSLLSAQGMNM.

Positions 1–300 (MASGRGASSR…SVTGVPTNPS (300 aa)) are interaction with MDFIC and MDFI. One can recognise a Cyclin N-terminal domain in the interval 12-147 (FFTREQLENT…IMLQTLGFEI (136 aa)). The interval 250–300 (RLKKIRNWRANQAARKPKVDGQVSETPLLGSSLVQNSILVDSVTGVPTNPS) is interaction with POLR2A. Composition is skewed to polar residues over residues 341 to 350 (TSYGLSSHQE) and 360 to 389 (TEQL…SISL). Residues 341–430 (TSYGLSSHQE…GPISTTPGII (90 aa)) form a disordered region. Residues 398–412 (DKISDHSSVKQEYTH) are compositionally biased toward basic and acidic residues. Lysine 407 participates in a covalent cross-link: Glycyl lysine isopeptide (Lys-Gly) (interchain with G-Cter in SUMO2). Position 480 is a phosphoserine (serine 480). Positions 497 to 652 (DKKEKSGSLK…SSSSSSSSVK (156 aa)) are disordered. 2 stretches are compositionally biased toward basic and acidic residues: residues 517–543 (SASK…EGSG) and 552–565 (ISRD…EHPS). Over residues 566 to 578 (SRHHTSSHKHSHS) the composition is skewed to basic residues. Over residues 579–588 (HSGSSSGGSK) the composition is skewed to low complexity. Serine 601 is modified (phosphoserine). 2 stretches are compositionally biased toward low complexity: residues 606–616 (SSDGISSSSSS) and 637–652 (SSKS…SSVK).

Belongs to the cyclin family. Cyclin C subfamily. In terms of assembly, interacts with CDK9 to form P-TEFb. Interacts with POLR2A (via the C-terminal domain (CTD)); mediates transcriptional activity. Interacts with HEXIM1; mediates formation of a tripartite complex with KPNA2. Interacts with HEXIM2. Interacts with PKN1; enhances MYOD1-dependent transcription. P-TEFB complex interacts with RB1; promotes phosphorylation of RB1. P-TEFB complex interacts with MYOD1; promotes the transcriptional activity of MYOD1 through its CDK9-mediated phosphorylation. Interacts with MDFI and MDFIC. Interacts with MON1B; down-regulates CCNT2-mediated activation of viral promoters during herpes simplex virus 1/HHV-1 infection. (Microbial infection) Interacts with HIV-2 and SIV Tat. Does not bind efficiently to the transactivation domain of the HIV-1 Tat. As to expression, ubiquitously expressed.

It is found in the cytoplasm. The protein resides in the perinuclear region. Its subcellular location is the nucleus. In terms of biological role, regulatory subunit of the cyclin-dependent kinase pair (CDK9/cyclin T) complex, also called positive transcription elongation factor B (P-TEFB), which is proposed to facilitate the transition from abortive to production elongation by phosphorylating the CTD (carboxy-terminal domain) of the large subunit of RNA polymerase II (RNAP II). The activity of this complex is regulated by binding with 7SK snRNA. Plays a role during muscle differentiation; P-TEFB complex interacts with MYOD1; this tripartite complex promotes the transcriptional activity of MYOD1 through its CDK9-mediated phosphorylation and binds the chromatin of promoters and enhancers of muscle-specific genes; this event correlates with hyperphosphorylation of the CTD domain of RNA pol II. In addition, enhances MYOD1-dependent transcription through interaction with PKN1. Involved in early embryo development. Functionally, (Microbial infection) Promotes transcriptional activation of early and late herpes simplex virus 1/HHV-1 promoters. This chain is Cyclin-T2, found in Homo sapiens (Human).